Reading from the N-terminus, the 118-residue chain is Large ribosomal subunit protein uL18 (118 aa).

Belongs to the universal ribosomal protein uL18 family. As to quaternary structure, part of the 50S ribosomal subunit; part of the 5S rRNA/L5/L18/L25 subcomplex. Contacts the 5S and 23S rRNAs.

In terms of biological role, this is one of the proteins that bind and probably mediate the attachment of the 5S RNA into the large ribosomal subunit, where it forms part of the central protuberance. The chain is Large ribosomal subunit protein uL18 from Nitratiruptor sp. (strain SB155-2).